Reading from the N-terminus, the 313-residue chain is MEEVLEAAEKIRSMEVRGAARIARFAAETLMKFAEKASDEKFDEEMRFAAETLLNTRPTAVSLYNAINYVMRYSGESVEEKRQSVIRRAREFINWVETAQRKIGEIGEKRIKDGYTVMTHCNSSAALSVIKKAHENGKRVEVIATESRPRWQGHLTVKQLREAGIEVTLIVDSAVRYFINEVDCVVVGADTITANGALINKIGTSQIALAAKEARVPFMVAAETYKFSPKTLFGELVVIEERDAREVAPEEILKLGVKVRNPAFDVTPRDYIDVIITEIGAIPPEMAYIVITERLGYAGIEEEEITLNSRHFD.

Substrate-binding positions include 17–20 (RGAA) and R57. Residue C121 is the Proton acceptor of the active site. The active-site Proton donor is D190. Residues 200–201 (NK) and K226 each bind substrate.

It belongs to the eIF-2B alpha/beta/delta subunits family. R15P isomerase subfamily.

It catalyses the reaction alpha-D-ribose 1,5-bisphosphate = D-ribulose 1,5-bisphosphate. Its function is as follows. Catalyzes the isomerization of ribose 1,5-bisphosphate (R15P) to ribulose 1,5-bisphosphate (RuBP), the CO(2) acceptor and substrate for RubisCO. Functions in an archaeal AMP degradation pathway, together with AMP phosphorylase and RubisCO. This Archaeoglobus fulgidus (strain ATCC 49558 / DSM 4304 / JCM 9628 / NBRC 100126 / VC-16) protein is Ribose 1,5-bisphosphate isomerase.